Consider the following 558-residue polypeptide: Mitochondrial nucleoid-associated protein 1 (558 aa).

The Extracellular portion of the chain corresponds to 1-527; it reads MGAAEPRMEV…VQCNTTIKKS (527 aa). Disordered regions lie at residues 29 to 88, 130 to 205, and 222 to 269; these read KMRG…SWTA, LQRV…KLGT, and LSDR…KTQK. The segment covering 36–45 has biased composition (polar residues); that stretch reads SADQNVSQSK. Residues 51 to 81 show a composition bias toward basic and acidic residues; it reads QKEKSPTRDLTRAKEKELEVDRPKRAVKAET. 2 stretches are compositionally biased toward polar residues: residues 131-144 and 187-197; these read QRVT…SDAT and SSTQPHANPAT. Residues 528–548 form a helical membrane-spanning segment; sequence GVGGLTMLFAGYFILCCNWSF. Topologically, residues 549–558 are cytoplasmic; sequence KHLKLQHWRK.

Its subcellular location is the mitochondrion inner membrane. It localises to the mitochondrion matrix. The protein resides in the mitochondrion nucleoid. Critical regulator of mitochondrial DNA (mtDNA) abundance. Binds dsDNA throughout the mitochondrial genome without sequence specificity and controls mtDNA copy number by promoting its replication. Also plays important roles in mitochondrial metabolism and cell proliferation. The sequence is that of Mitochondrial nucleoid-associated protein 1 from Mus musculus (Mouse).